Reading from the N-terminus, the 41-residue chain is Large ribosomal subunit protein bL36 (41 aa).

It belongs to the bacterial ribosomal protein bL36 family.

The sequence is that of Large ribosomal subunit protein bL36 from Brucella abortus (strain S19).